Reading from the N-terminus, the 410-residue chain is Centromere protein U (410 aa).

A disordered region spans residues 1 to 72 (MAARRSLRYS…YETFDPPLHS (72 aa)). The Nuclear localization signal motif lies at 4 to 21 (RRSLRYSGDPGAKRSRNT). Over residues 28–38 (RKQKAGQKPKR) the composition is skewed to basic residues. Position 73 is a phosphothreonine; by PLK1 (Thr73). The interval 87–228 (SSTSPATHRG…THSDASESMH (142 aa)) is disordered. A compositionally biased stretch (polar residues) spans 101-115 (NLNPSENEASGNDSI). Phosphoserine is present on residues Ser105, Ser110, Ser114, Ser130, Ser133, and Ser135. The span at 138 to 149 (DNVRRSVSIERP) shows a compositional bias: basic and acidic residues. Positions 158 to 169 (PAAASSSSSPSE) are enriched in low complexity. Residue Lys179 forms a Glycyl lysine isopeptide (Lys-Gly) (interchain with G-Cter in SUMO2) linkage. At Ser186 the chain carries Phosphoserine. Thr191 carries the phosphothreonine modification. Over residues 200–218 (TQKKVRPSPGRRKRPRRGS) the composition is skewed to basic residues. Ser224 bears the Phosphoserine mark. Positions 289-352 (QMLKALKRKN…LKNSKHFLSN (64 aa)) form a coiled coil. Residues 295-312 (KRKNTKIISNMEKKRQRL) carry the Nuclear localization signal motif.

The protein belongs to the CENP-U/AME1 family. Component of the CENPA-NAC complex, at least composed of CENPA, CENPC, CENPH, CENPM, CENPN, CENPT and CENPU. The CENPA-NAC complex interacts with the CENPA-CAD complex, composed of CENPI, CENPK, CENPL, CENPO, CENPP, CENPQ, CENPR and CENPS. Interacts with MLF1. In terms of processing, phosphorylated by PLK1 at Thr-73, creating a self-tethering site that specifically interacts with the polo-box domain of PLK1. As to expression, expressed at high levels in glioblastoma cell lines. Up-regulated in GBM (glioblastoma multiforme) tumors. Significantly increased in both the tumor core as well as the contralateral striatum and cortex in gliomas.

It localises to the cytoplasm. Its subcellular location is the nucleus. The protein localises to the chromosome. It is found in the centromere. The protein resides in the kinetochore. Functionally, component of the CENPA-NAC (nucleosome-associated) complex, a complex that plays a central role in assembly of kinetochore proteins, mitotic progression and chromosome segregation. The CENPA-NAC complex recruits the CENPA-CAD (nucleosome distal) complex and may be involved in incorporation of newly synthesized CENPA into centromeres. Plays an important role in the correct PLK1 localization to the mitotic kinetochores. A scaffold protein responsible for the initial recruitment and maintenance of the kinetochore PLK1 population until its degradation. Involved in transcriptional repression. The chain is Centromere protein U (Cenpu) from Rattus norvegicus (Rat).